Here is a 368-residue protein sequence, read N- to C-terminus: uncharacterized protein (368 aa).

Belongs to the Gfo/Idh/MocA family.

This is an uncharacterized protein from Schizosaccharomyces pombe (strain 972 / ATCC 24843) (Fission yeast).